Here is a 533-residue protein sequence, read N- to C-terminus: Multicopper oxidase CueO (533 aa).

Positions 1 to 28 form a signal peptide, tat-type signal; that stretch reads MHRRDFLKLTAALGAATSLPLWSRAALA. Plastocyanin-like domains follow at residues 53–166, 221–290, and 416–532; these read QTGS…IDDS, PYPQ…DTRD, and AFNF…FTVS. Residues histidine 102, histidine 104, histidine 142, and histidine 144 each coordinate Cu cation. The Cu cation site is built by histidine 458, histidine 461, histidine 463, histidine 514, cysteine 515, histidine 516, and histidine 520.

Belongs to the multicopper oxidase family. As to quaternary structure, monomer. It depends on Cu cation as a cofactor. In terms of processing, predicted to be exported by the Tat system. The position of the signal peptide cleavage has not been experimentally proven.

It localises to the periplasm. It carries out the reaction 4 Cu(+) + O2 + 4 H(+) = 4 Cu(2+) + 2 H2O. Functionally, multicopper oxidase involved in copper homeostasis and copper tolerance under aerobic conditions. Is responsible for the oxidation of Cu(+) to the less harmful Cu(2+) in the periplasm, thereby preventing Cu(+) from entering the cytoplasm. The protein is Multicopper oxidase CueO (cueO) of Yersinia pestis.